Here is a 1460-residue protein sequence, read N- to C-terminus: ABC transporter C family member 5 (1460 aa).

2 disordered regions span residues 1–23 (MKYNNLENDDSDIHNNNNNNESE) and 37–68 (GNNNNDINNNNNINNNNDSLDYENNKGSKKKN). Over residues 37 to 55 (GNNNNDINNNNNINNNNDS) the composition is skewed to low complexity. 5 helical membrane-spanning segments follow: residues 196-216 (FALSWVHFGLNVISQFIGPIF), 238-258 (LGYYYALILFVNSMLGSIFLY), 320-340 (LIFAVPMIIVSMILLYDCVGW), 425-445 (LIVVVQSIPTIISIFMFTVYY), and 456-476 (IFAAVAYLNIIRVPFTFLPYG). The ABC transmembrane type-1 1 domain occupies 196–482 (FALSWVHFGL…LPYGYNIYIQ (287 aa)). Residues 537–567 (IKPQTNPPPPRTTPSNDKSSPSGNNSNNEKK) are disordered. Residues 551–563 (SNDKSSPSGNNSN) are compositionally biased toward polar residues. Positions 560 to 783 (NNSNNEKKEV…INSAYGNSSL (224 aa)) constitute an ABC transporter 1 domain. 593–600 (GPVGSGKS) is an ATP binding site. 4 helical membrane passes run 842-862 (MYYVTAGGGFLFLIALLGYCI), 922-942 (AGEFLGVFIAIGVLTVLLIIV), 1014-1034 (ILVIISIATPWLLLPMTPIII), and 1108-1128 (WLGLRLSVLGNLITLLSCIFI). The ABC transmembrane type-1 2 domain occupies 853–1166 (FLIALLGYCI…ATQQLAELET (314 aa)). Residues 1210–1444 (IIFENVVMSY…ENSLFNWLID (235 aa)) enclose the ABC transporter 2 domain. Residue 1244 to 1251 (GRTGSGKS) participates in ATP binding.

The protein belongs to the ABC transporter superfamily. ABCC family. Conjugate transporter (TC 3.A.1.208) subfamily.

It localises to the membrane. The sequence is that of ABC transporter C family member 5 (abcC5) from Dictyostelium discoideum (Social amoeba).